Reading from the N-terminus, the 311-residue chain is Methionyl-tRNA formyltransferase (311 aa).

110–113 lines the (6S)-5,6,7,8-tetrahydrofolate pocket; it reads SLLP.

It belongs to the Fmt family.

It carries out the reaction L-methionyl-tRNA(fMet) + (6R)-10-formyltetrahydrofolate = N-formyl-L-methionyl-tRNA(fMet) + (6S)-5,6,7,8-tetrahydrofolate + H(+). In terms of biological role, attaches a formyl group to the free amino group of methionyl-tRNA(fMet). The formyl group appears to play a dual role in the initiator identity of N-formylmethionyl-tRNA by promoting its recognition by IF2 and preventing the misappropriation of this tRNA by the elongation apparatus. This Streptococcus sanguinis (strain SK36) protein is Methionyl-tRNA formyltransferase.